Reading from the N-terminus, the 196-residue chain is Protein GrpE (196 aa).

The disordered stretch occupies residues 1–40; that stretch reads MSSKEQKTPEGQAPEEIIMDQHEEVEAVEPNDSAEQVDPR.

The protein belongs to the GrpE family. Homodimer.

The protein localises to the cytoplasm. Participates actively in the response to hyperosmotic and heat shock by preventing the aggregation of stress-denatured proteins, in association with DnaK and GrpE. It is the nucleotide exchange factor for DnaK and may function as a thermosensor. Unfolded proteins bind initially to DnaJ; upon interaction with the DnaJ-bound protein, DnaK hydrolyzes its bound ATP, resulting in the formation of a stable complex. GrpE releases ADP from DnaK; ATP binding to DnaK triggers the release of the substrate protein, thus completing the reaction cycle. Several rounds of ATP-dependent interactions between DnaJ, DnaK and GrpE are required for fully efficient folding. In Salmonella enteritidis PT4 (strain P125109), this protein is Protein GrpE.